We begin with the raw amino-acid sequence, 129 residues long: Large ribosomal subunit protein bL19 (129 aa).

Its function is as follows. This protein is located at the 30S-50S ribosomal subunit interface and may play a role in the structure and function of the aminoacyl-tRNA binding site. The chain is Large ribosomal subunit protein bL19 from Rhodopseudomonas palustris (strain ATCC BAA-98 / CGA009).